The following is a 436-amino-acid chain: Chromosomal replication initiator protein DnaA (436 aa).

The interval 1–69 (MSIFTKIKKS…SELYEKETGI (69 aa)) is domain I, interacts with DnaA modulators. The segment at 69–97 (IKPKIDIVTKEISHRPLTIEEIIEPTTPS) is domain II. The tract at residues 98 to 311 (VLIPEYTFES…GMITKINAMS (214 aa)) is domain III, AAA+ region. Residues Gly-142, Gly-144, Lys-145, and Thr-146 each coordinate ATP. The interval 312-436 (KILGISEITL…KNKIQIKKSE (125 aa)) is domain IV, binds dsDNA.

Belongs to the DnaA family. Oligomerizes as a right-handed, spiral filament on DNA at oriC.

It is found in the cytoplasm. Its function is as follows. Plays an essential role in the initiation and regulation of chromosomal replication. ATP-DnaA binds to the origin of replication (oriC) to initiate formation of the DNA replication initiation complex once per cell cycle. Binds the DnaA box (a 9 base pair repeat at the origin) and separates the double-stranded (ds)DNA. Forms a right-handed helical filament on oriC DNA; dsDNA binds to the exterior of the filament while single-stranded (ss)DNA is stabiized in the filament's interior. The ATP-DnaA-oriC complex binds and stabilizes one strand of the AT-rich DNA unwinding element (DUE), permitting loading of DNA polymerase. After initiation quickly degrades to an ADP-DnaA complex that is not apt for DNA replication. Binds acidic phospholipids. In Nautilia profundicola (strain ATCC BAA-1463 / DSM 18972 / AmH), this protein is Chromosomal replication initiator protein DnaA.